We begin with the raw amino-acid sequence, 570 residues long: Developmental and secondary metabolism regulator veA (570 aa).

Disordered regions lie at residues 1-24 (MATRPPLMPPANETESSVSRISRE), 39-60 (ERARACGAGAKSSADRRPVDPP), 266-491 (DMYA…LGSG), and 504-541 (KRSHEETFGSDERPLHNGMRPDMDQYPSMGRKQPDYGR). The Velvet domain maps to 25–231 (GKKITYKLSV…AEQGCRVRIR (207 aa)). Positions 39–44 (ERARAC) match the Nuclear localization signal motif. Positions 278–287 (STSISTTADT) are enriched in polar residues. The span at 315 to 335 (SMPAASAAPAPAPVHSPATSA) shows a compositional bias: low complexity. Composition is skewed to polar residues over residues 336 to 354 (QTSSYQSHLSFGATQSQYP), 363 to 395 (QSATPTNTYSPHPSYSHSRNPSNGTEYDATSSG), and 427 to 445 (NMQTSTDSRSSDANAYPTL). The interval 454–493 (PTPANHVTSLPPLKVLSGEYSHPSQPNAQSPHHDLGSGKR) is PEST. Over residues 505–526 (RSHEETFGSDERPLHNGMRPDM) the composition is skewed to basic and acidic residues.

Belongs to the velvet family. VeA subfamily. As to quaternary structure, component of the heterotrimeric velvet complex composed of laeA, veA and velB; VeA acting as a bridging protein between laeA and velB.

The protein resides in the nucleus. Its subcellular location is the cytoplasm. Its function is as follows. Component of the velvet transcription factor complex that controls sexual/asexual developmental ratio in response to light, promoting sexual development in the darkness while stimulating asexual sporulation under illumination. The velvet complex hat acts as a global regulator for secondary metabolite gene expression. Controls the expression of hundreds of genes, including those comprising more than a dozen known secondary metabolite gene clusters. Controls the expression of the gliotoxin gene cluster. Controls the expression of the fumagillin, fumitremorgin G, fumigaclavine C and glionitrin gene clusters. The regulation of the fumagillin gene cluster and fumagillin production is performed through direct control of the expression of fumR. Negatively regulates conidiation. Required for normal protease activity. This is Developmental and secondary metabolism regulator veA from Aspergillus fumigatus (strain ATCC MYA-4609 / CBS 101355 / FGSC A1100 / Af293) (Neosartorya fumigata).